Here is a 529-residue protein sequence, read N- to C-terminus: Chaperonin GroEL, chloroplastic (529 aa).

ATP contacts are provided by residues 29-32 (TLGP), 86-90 (DGTTT), Gly-414, 480-482 (DAA), and Asp-496.

The protein belongs to the chaperonin (HSP60) family. In terms of assembly, forms a cylinder of 14 subunits composed of two heptameric rings stacked back-to-back. Interacts with the co-chaperonin GroES.

The protein resides in the plastid. The protein localises to the chloroplast. The catalysed reaction is ATP + H2O + a folded polypeptide = ADP + phosphate + an unfolded polypeptide.. Together with its co-chaperonin GroES, plays an essential role in assisting protein folding. The GroEL-GroES system forms a nano-cage that allows encapsulation of the non-native substrate proteins and provides a physical environment optimized to promote and accelerate protein folding. This chain is Chaperonin GroEL, chloroplastic, found in Guillardia theta (Cryptophyte).